The sequence spans 1059 residues: Zinc finger protein 628 (1059 aa).

6 C2H2-type zinc fingers span residues 36–58 (YECG…QRTH), 64–86 (YKCP…QRGH), 92–114 (YQCP…RSVH), 120–142 (FICG…LRQH), 148–170 (YPCP…RHVH), and 176–198 (YTCG…QRVH). Thr199 is subject to Phosphothreonine. The C2H2-type 7 zinc finger occupies 204–226 (FRCPLCPKTFTHSSNLLLHQRTH). 3 disordered regions span residues 226-247 (HGAA…REPG), 260-280 (LQPH…PVVP), and 312-351 (EHQP…PAAA). A compositionally biased stretch (low complexity) spans 228-237 (AAPAPGTASA). Over residues 263–279 (HSPPAPPAPPPPPPPVV) the composition is skewed to pro residues. Positions 323–335 (PQPQEAPAEAPKA) are enriched in low complexity. Pro residues predominate over residues 336–351 (DQPPSPLPQPPPPAAA). C2H2-type zinc fingers lie at residues 356 to 378 (FACL…QHSH), 386 to 408 (FRCG…QQCH), 454 to 476 (YKCA…LRDH), 482 to 504 (YQCG…QRVH), 510 to 532 (FTCG…LRLH), 538 to 560 (YACG…RHVH), and 566 to 588 (HACG…QRVH). The residue at position 589 (Thr589) is a Phosphothreonine. 2 consecutive C2H2-type zinc fingers follow at residues 594-616 (FRCP…QRTH) and 622-644 (FTCP…LRTH). The segment covering 644 to 658 (HAPANTPPSTTAPAA) has biased composition (low complexity). The segment at 644–674 (HAPANTPPSTTAPAAGPQPPAPLAAARAPPA) is disordered. 4 tandem repeats follow at residues 818–831 (VQLQ…EVTT), 832–842 (VQLQPAQEVTT), 843–853 (VQLQPAQEVTT), and 854–864 (VQLQPAQEVTT). Residues 818–864 (VQLQPLRPAPEVTTVQLQPAQEVTTVQLQPAQEVTTVQLQPAQEVTT) form a 4 X approximate tandem repeats region. The tract at residues 943 to 1059 (DGEQTRLCVQ…LPAVQLVHTF (117 aa)) is interaction with TAF4B.

In terms of assembly, interacts with TAF4B.

The protein resides in the nucleus. Its function is as follows. Transcriptional activator. Binds DNA on GT-box consensus sequence 5'-TTGGTT-3'. Plays a role in spermiogenesis. In Homo sapiens (Human), this protein is Zinc finger protein 628 (ZNF628).